Consider the following 304-residue polypeptide: Protoheme IX farnesyltransferase 2 (304 aa).

Helical transmembrane passes span 28 to 48, 50 to 70, 98 to 118, 122 to 142, 150 to 170, 176 to 196, 223 to 243, 245 to 265, and 282 to 302; these read VVALMLITAVVGMSLAPVVDF, WLQAAFGLVGIGLMAGSAAAF, ISVAIFSTALGVIGFVLLYAL, LTAWMTFLSLLGYAVVYTMYL, IVIAGIAGAMPPLLGWTAVTG, AWLLVMIIFIWTPPHFWAIAI, ILLYTILLTLVCILPVLVGMV, SVYLFSSLLLNAGFMYHAWKL, and IYHLLALFVALLADHYLGLFF.

This sequence belongs to the UbiA prenyltransferase family. Protoheme IX farnesyltransferase subfamily.

The protein localises to the cell inner membrane. It carries out the reaction heme b + (2E,6E)-farnesyl diphosphate + H2O = Fe(II)-heme o + diphosphate. Its pathway is porphyrin-containing compound metabolism; heme O biosynthesis; heme O from protoheme: step 1/1. In terms of biological role, converts heme B (protoheme IX) to heme O by substitution of the vinyl group on carbon 2 of heme B porphyrin ring with a hydroxyethyl farnesyl side group. The sequence is that of Protoheme IX farnesyltransferase 2 from Vibrio campbellii (strain ATCC BAA-1116).